A 258-amino-acid chain; its full sequence is 6-phosphogluconolactonase (258 aa).

An N-acetylalanine modification is found at Ala2. Position 49 is a phosphoserine (Ser49). At Lys180 the chain carries N6-acetyllysine.

It belongs to the glucosamine/galactosamine-6-phosphate isomerase family. 6-phosphogluconolactonase subfamily.

Its subcellular location is the cytoplasm. The enzyme catalyses 6-phospho-D-glucono-1,5-lactone + H2O = 6-phospho-D-gluconate + H(+). Its pathway is carbohydrate degradation; pentose phosphate pathway; D-ribulose 5-phosphate from D-glucose 6-phosphate (oxidative stage): step 2/3. In terms of biological role, hydrolysis of 6-phosphogluconolactone to 6-phosphogluconate. The sequence is that of 6-phosphogluconolactonase (PGLS) from Bos taurus (Bovine).